A 294-amino-acid polypeptide reads, in one-letter code: Ribosomal protein L11 methyltransferase (294 aa).

S-adenosyl-L-methionine contacts are provided by Thr-147, Gly-169, Asp-191, and Asn-231.

Belongs to the methyltransferase superfamily. PrmA family.

It localises to the cytoplasm. The catalysed reaction is L-lysyl-[protein] + 3 S-adenosyl-L-methionine = N(6),N(6),N(6)-trimethyl-L-lysyl-[protein] + 3 S-adenosyl-L-homocysteine + 3 H(+). Its function is as follows. Methylates ribosomal protein L11. In Dichelobacter nodosus (strain VCS1703A), this protein is Ribosomal protein L11 methyltransferase.